Consider the following 468-residue polypeptide: Two-component response regulator-like APRR9 (468 aa).

One can recognise a Response regulatory domain in the interval 38–156 (RVLLVESDYS…ELKNLWQHVW (119 aa)). 2 stretches are compositionally biased toward polar residues: residues 168–177 (HAQSLPASQH) and 194–203 (DQGSGAQAIN). Disordered regions lie at residues 168–203 (HAQS…QAIN), 302–416 (VVAL…SRSQ), and 442–468 (RKKL…STKS). The segment covering 315-327 (TPTESHEKLRKVT) has biased composition (basic and acidic residues). Positions 328 to 364 (SDQGSATTSSNQENIGSSSVSFRNQVLQSTVTNQKQD) are enriched in polar residues. 2 stretches are compositionally biased toward basic and acidic residues: residues 371–382 (SNREKAASKEVE) and 400–409 (EKPKEEESAK). One can recognise a CCT domain in the interval 417 to 459 (REAALMKFRLKRKDRCFDKKVRYQSRKKLAEQRPRVKGQFVRT). Positions 458–468 (RTVNSDASTKS) are enriched in polar residues.

The protein belongs to the ARR-like family. In terms of processing, phosphorylated. Phosphorylation varies throughout the diurnal cycle.

The protein localises to the nucleus. Transcriptional repressor of CCA1 and LHY, and positive regulator of LWD1 and LWD2 expression. Controls photoperiodic flowering response and temperature compensation. Involved in the positive and negative feedback loops of the circadian clock. Expression of several members of the ARR-like family is controlled by circadian rhythm. Regulated at the transcriptional level by a corepressor complex consisting of ELF4, ELF3, and LUX. APRR9, APRR7, and APRR5 coordinately act on the upstream region of the target genes to repress their expression from noon until midnight. The particular coordinated sequential expression of APRR9, APRR7, APRR5, APRR3 and APPR1 result to circadian waves that may be at the basis of the endogenous circadian clock. The protein is Two-component response regulator-like APRR9 (APRR9) of Arabidopsis thaliana (Mouse-ear cress).